The chain runs to 280 residues: 4-deoxy-L-threo-5-hexosulose-uronate ketol-isomerase (280 aa).

Residues histidine 198, histidine 200, glutamate 205, and histidine 247 each coordinate Zn(2+).

Belongs to the KduI family. The cofactor is Zn(2+).

The catalysed reaction is 5-dehydro-4-deoxy-D-glucuronate = 3-deoxy-D-glycero-2,5-hexodiulosonate. It functions in the pathway glycan metabolism; pectin degradation; 2-dehydro-3-deoxy-D-gluconate from pectin: step 4/5. Catalyzes the isomerization of 5-dehydro-4-deoxy-D-glucuronate to 3-deoxy-D-glycero-2,5-hexodiulosonate. In Bacteroides fragilis (strain YCH46), this protein is 4-deoxy-L-threo-5-hexosulose-uronate ketol-isomerase.